The chain runs to 404 residues: MTEVTELSRPEGEALNTREVLLNLGPQHPSTHGVLRLVLELDGEFVERVDPHIGYLHRGTEKLAESFTYTQIFPLTDRLDYLCPPSNNLAFALAVEKLLGIEAPIRAQYIRVMMAELARISGHLLITGALPMDLGAMTALLYVMREREMIMDLLEMITGARMHTSFCRVGGVREDLPDGFFPKIREFCDIFPNRIRDYERLLEDNRVFLNRTKGIGVISAEDAVDLGLSGPNLRASGVDWDIRRDEPYEIYDRLDFNVITRDEGDCYARWRCRVDEMRESIGIIKQCIDQMPEGPFQIDMPTIAFPLDKDRVHCSMEALIQHFDLSAYGFKVPKGEVYSAIEAPKGELGFYIISDGSPKPFRMKVRAPSFVNLQALFGVTNARYLADMIAVLGSLDPVMAEVDK.

Belongs to the complex I 49 kDa subunit family. In terms of assembly, NDH-1 is composed of 14 different subunits. Subunits NuoB, C, D, E, F, and G constitute the peripheral sector of the complex.

It localises to the cell inner membrane. It catalyses the reaction a quinone + NADH + 5 H(+)(in) = a quinol + NAD(+) + 4 H(+)(out). Functionally, NDH-1 shuttles electrons from NADH, via FMN and iron-sulfur (Fe-S) centers, to quinones in the respiratory chain. The immediate electron acceptor for the enzyme in this species is believed to be ubiquinone. Couples the redox reaction to proton translocation (for every two electrons transferred, four hydrogen ions are translocated across the cytoplasmic membrane), and thus conserves the redox energy in a proton gradient. In Rhizobium etli (strain CIAT 652), this protein is NADH-quinone oxidoreductase subunit D 2.